The sequence spans 338 residues: tRNA N6-adenosine threonylcarbamoyltransferase (338 aa).

Residues His111 and His115 each contribute to the Fe cation site. Residues 134-138, Asp167, Gly180, and Asn272 contribute to the substrate site; that span reads LVSGG. Fe cation is bound at residue Asp300.

The protein belongs to the KAE1 / TsaD family. Fe(2+) is required as a cofactor.

It localises to the cytoplasm. It catalyses the reaction L-threonylcarbamoyladenylate + adenosine(37) in tRNA = N(6)-L-threonylcarbamoyladenosine(37) in tRNA + AMP + H(+). Required for the formation of a threonylcarbamoyl group on adenosine at position 37 (t(6)A37) in tRNAs that read codons beginning with adenine. Is involved in the transfer of the threonylcarbamoyl moiety of threonylcarbamoyl-AMP (TC-AMP) to the N6 group of A37, together with TsaE and TsaB. TsaD likely plays a direct catalytic role in this reaction. The chain is tRNA N6-adenosine threonylcarbamoyltransferase from Shewanella halifaxensis (strain HAW-EB4).